The sequence spans 337 residues: MENLVALTQEALKLVADAGDLNALEAVRVDYLGKKGHITALMKNLGGLSPEERPAAGAEINKAKDAVQEALNTRKQLLEQAAINAKLASEVVDVSLPGRGLHTGGLHPVTRTLQRIEEIFAAVGYSVEEGPEIEDDYHNFEALNIPSHHPARAMHDTFYVDDTHVLRTHTSPVQVRTMENKKPPIRVICPGRVYRCDSDMTHSPMFHQVEGLVVDKNISFADLKGTMDQFLKAFFEADVPVRFRPSYFPFTEPSAEMDIQCTQCRGKGCRVCKSTGWLEVGGCGMVHPEVFNASGVDPETYTGFAFGMGVERLAMLRYGVNDLRLFFENDLRFLKQF.

Mg(2+) is bound at residue Glu-252.

The protein belongs to the class-II aminoacyl-tRNA synthetase family. Phe-tRNA synthetase alpha subunit type 1 subfamily. In terms of assembly, tetramer of two alpha and two beta subunits. It depends on Mg(2+) as a cofactor.

Its subcellular location is the cytoplasm. The catalysed reaction is tRNA(Phe) + L-phenylalanine + ATP = L-phenylalanyl-tRNA(Phe) + AMP + diphosphate + H(+). This Cellvibrio japonicus (strain Ueda107) (Pseudomonas fluorescens subsp. cellulosa) protein is Phenylalanine--tRNA ligase alpha subunit.